A 252-amino-acid chain; its full sequence is Adenosylcobinamide-GDP ribazoletransferase (252 aa).

5 consecutive transmembrane segments (helical) span residues 33-53, 105-125, 132-152, 184-204, and 215-235; these read FISP…VVLL, TGSG…IATL, LWFF…LLGL, FAIL…LLVF, and MSGD…LLVA.

It belongs to the CobS family. Mg(2+) is required as a cofactor.

Its subcellular location is the cell membrane. The catalysed reaction is alpha-ribazole + adenosylcob(III)inamide-GDP = adenosylcob(III)alamin + GMP + H(+). It carries out the reaction alpha-ribazole 5'-phosphate + adenosylcob(III)inamide-GDP = adenosylcob(III)alamin 5'-phosphate + GMP + H(+). Its pathway is cofactor biosynthesis; adenosylcobalamin biosynthesis; adenosylcobalamin from cob(II)yrinate a,c-diamide: step 7/7. Its function is as follows. Joins adenosylcobinamide-GDP and alpha-ribazole to generate adenosylcobalamin (Ado-cobalamin). Also synthesizes adenosylcobalamin 5'-phosphate from adenosylcobinamide-GDP and alpha-ribazole 5'-phosphate. The sequence is that of Adenosylcobinamide-GDP ribazoletransferase from Sulfolobus acidocaldarius (strain ATCC 33909 / DSM 639 / JCM 8929 / NBRC 15157 / NCIMB 11770).